A 151-amino-acid chain; its full sequence is Sperm surface protein Sp17 (151 aa).

Disordered regions lie at residues 56 to 115 and 127 to 151; these read DPAE…EKEE and GHIA…EENK. A compositionally biased stretch (basic and acidic residues) spans 62-98; it reads SKVEDRFYNNHAFEEQEPPEKSDPKQEESQISGKEEE. Residues 114-143 enclose the IQ domain; that stretch reads EEVAAVKIQAAFRGHIAREEAKKMKTNSLQ.

In terms of assembly, homodimer. May interact with ROPN1. Testis and sperm specific.

Its subcellular location is the membrane. In terms of biological role, sperm surface zona pellucida binding protein. Helps to bind spermatozoa to the zona pellucida with high affinity. Might function in binding zona pellucida and carbohydrates. This Homo sapiens (Human) protein is Sperm surface protein Sp17 (SPA17).